Reading from the N-terminus, the 453-residue chain is Nuclear distribution protein PAC1 (453 aa).

The LisH domain maps to 19–51; that stretch reads QKDELHKSILDYFKTNNLHESFATLMREANQEG. Residues 69 to 96 adopt a coiled-coil conformation; that stretch reads TSVIRLQKKIMEMESRISQLQEELSAAP. WD repeat units follow at residues 120-161, 162-201, 205-244, 247-286, 314-355, 356-395, and 413-452; these read GHRL…RTLK, GHTK…KNIK, GHDH…CTKT, GHAE…TKVE, LDPN…KTLT, GHDN…CTRT, and IEAP…KIWT.

This sequence belongs to the WD repeat LIS1/nudF family. In terms of assembly, self-associates. Interacts with NDL1 and dynein.

Its subcellular location is the cytoplasm. It localises to the cytoskeleton. The protein resides in the spindle pole. Its function is as follows. Positively regulates the activity of the minus-end directed microtubule motor protein dynein. May enhance dynein-mediated microtubule sliding by targeting dynein to the microtubule plus end. Required for nuclear migration during vegetative growth as well as development. Required for localization of dynein to the mitotic spindle poles. Recruits additional proteins to the dynein complex at SPBs. Required for retrograde early endosome (EE) transport from the hyphal tip. The sequence is that of Nuclear distribution protein PAC1 from Mycosarcoma maydis (Corn smut fungus).